Here is a 184-residue protein sequence, read N- to C-terminus: ATP synthase subunit delta (184 aa).

This sequence belongs to the ATPase delta chain family. F-type ATPases have 2 components, F(1) - the catalytic core - and F(0) - the membrane proton channel. F(1) has five subunits: alpha(3), beta(3), gamma(1), delta(1), epsilon(1). F(0) has three main subunits: a(1), b(2) and c(10-14). The alpha and beta chains form an alternating ring which encloses part of the gamma chain. F(1) is attached to F(0) by a central stalk formed by the gamma and epsilon chains, while a peripheral stalk is formed by the delta and b chains.

The protein resides in the cell inner membrane. Its function is as follows. F(1)F(0) ATP synthase produces ATP from ADP in the presence of a proton or sodium gradient. F-type ATPases consist of two structural domains, F(1) containing the extramembraneous catalytic core and F(0) containing the membrane proton channel, linked together by a central stalk and a peripheral stalk. During catalysis, ATP synthesis in the catalytic domain of F(1) is coupled via a rotary mechanism of the central stalk subunits to proton translocation. Functionally, this protein is part of the stalk that links CF(0) to CF(1). It either transmits conformational changes from CF(0) to CF(1) or is implicated in proton conduction. The protein is ATP synthase subunit delta of Rickettsia peacockii (strain Rustic).